A 252-amino-acid polypeptide reads, in one-letter code: MQICLMDETGATDGALSVLAARWGLEHDEDNPMALVLTPQHLELRKRDEPKLGGIFVDFVGGAMAHRRKFGGGRGEAVAKAVGIKGDYLPDVVDATAGLGRDAFVLASVGCRVRMLERNPVVAALLDDGLTRGYADADIGGWLQERLQLIHASSLTALTDITPRPQVVYLDPMFPHRQKSALVKKEMRVFQSLVGPDLDADGLLEPARQLATKRVVVKRPDYAPPLADVATPNAVVTKGHRFDIYAGTPLTE.

Residues 101–102 (RD), 117–118 (ER), 153–154 (SS), and D171 contribute to the S-adenosyl-L-methionine site.

This sequence belongs to the methyltransferase superfamily. RsmJ family.

Its subcellular location is the cytoplasm. It catalyses the reaction guanosine(1516) in 16S rRNA + S-adenosyl-L-methionine = N(2)-methylguanosine(1516) in 16S rRNA + S-adenosyl-L-homocysteine + H(+). Functionally, specifically methylates the guanosine in position 1516 of 16S rRNA. This chain is Ribosomal RNA small subunit methyltransferase J, found in Salmonella choleraesuis (strain SC-B67).